A 250-amino-acid polypeptide reads, in one-letter code: Protein orai-2 (250 aa).

4 helical membrane-spanning segments follow: residues 66-83 (TSALLSGFAMVAMVEVQL), 94-114 (LIAFSACTTVLVAVHLFALLI), 148-168 (LAWGFSTVLGILLFLAEVVLL), and 192-212 (AALVSTIIMVPVGLIFVVFTI).

It belongs to the Orai family. As to quaternary structure, oligomerizes in homomeric and heteromeric ORAI complexes. Native CRAC channels most likely consist of hexameric ORAI heteromers, implying that diverse ORAI1, ORAI2 and ORAI3 subunit combinations with distinct biophysical properties can operate in a cell-type specific way. Interacts with STIM1; this regulates channel activity. Interacts with CRACR2A/EFCAB4B.

The protein resides in the cell membrane. The catalysed reaction is Ca(2+)(in) = Ca(2+)(out). CRAC channels are regulated by fast Ca(2+)-dependent inactivation (FCDI), a mechanism that limits Ca(2+) influx and cell toxicity. ORAI2 channels display prominent FCDI. Inhibited by lanthanides such as Gd(3+) ions. Pore-forming subunit of inward rectifying Ca(2+) release-activated Ca(2+) (CRAC) channels. Assembles with ORAI1 and ORAI3 to form hexameric CRAC channels that mediate Ca(2+) influx upon depletion of endoplasmic reticulum Ca(2+) store and channel activation by Ca(2+) sensor STIM1, a process known as store-operated Ca(2+) entry (SOCE). Various pore subunit combinations may account for distinct CRAC channel spatiotemporal and cell-type specific dynamics. ORAI1 mainly contributes to the generation of Ca(2+) plateaus involved in sustained Ca(2+) entry and is dispensable for cytosolic Ca(2+) oscillations, whereas ORAI2 and ORAI3 generate oscillatory patterns. CRAC channels assemble in Ca(2+) signaling microdomains where Ca(2+) influx is coupled to calmodulin and calcineurin signaling and activation of NFAT transcription factors recruited to ORAI1 via AKAP5. CRAC channels are the main pathway for Ca(2+) influx in T cells and promote the immune response to pathogens by activating NFAT-dependent cytokine and chemokine transcription. The chain is Protein orai-2 (Orai2) from Mus musculus (Mouse).